Here is a 404-residue protein sequence, read N- to C-terminus: Corticosteroid-binding globulin (404 aa).

Positions 1–30 (MAWSTRTMMSLALYTCFLWLLTSGLKTVQS) are cleaved as a signal peptide. N-linked (GlcNAc...) asparagine glycans are attached at residues asparagine 95 and asparagine 225. Glutamine 253 lines the cortisol pocket. N-linked (GlcNAc...) asparagine glycosylation is present at asparagine 259. Glutamate 285 is a binding site for cortisol. N-linked (GlcNAc...) asparagine glycosylation is present at asparagine 326. Cortisol is bound at residue tryptophan 392.

The protein belongs to the serpin family. In terms of tissue distribution, expressed by the liver; secreted in plasma.

It localises to the secreted. In terms of biological role, major transport protein for glucocorticoids and progestins in the blood of almost all vertebrate species. The chain is Corticosteroid-binding globulin (SERPINA6) from Mesocricetus auratus (Golden hamster).